The primary structure comprises 512 residues: Glycerol kinase 2 (512 aa).

Thr-18 is an ADP binding site. ATP is bound by residues Thr-18, Thr-19, and Ser-20. Sn-glycerol 3-phosphate is bound at residue Thr-18. Residue Arg-22 coordinates ADP. Positions 88, 89, 140, and 255 each coordinate sn-glycerol 3-phosphate. Glycerol contacts are provided by Arg-88, Glu-89, Tyr-140, Asp-255, and Gln-256. Thr-277 and Gly-321 together coordinate ADP. Positions 277, 321, 325, and 422 each coordinate ATP. The ADP site is built by Gly-422 and Asn-426.

It belongs to the FGGY kinase family.

It carries out the reaction glycerol + ATP = sn-glycerol 3-phosphate + ADP + H(+). Its pathway is polyol metabolism; glycerol degradation via glycerol kinase pathway; sn-glycerol 3-phosphate from glycerol: step 1/1. Its activity is regulated as follows. Inhibited by fructose 1,6-bisphosphate (FBP). Key enzyme in the regulation of glycerol uptake and metabolism. Catalyzes the phosphorylation of glycerol to yield sn-glycerol 3-phosphate. The chain is Glycerol kinase 2 from Streptomyces coelicolor (strain ATCC BAA-471 / A3(2) / M145).